The sequence spans 341 residues: DnaJ homolog subfamily C member 22 (341 aa).

One can recognise a TM2 domain in the interval 4–50 (GLLMTYALWAFGGPVGLHHLYLGRDSHALLWMLTLGGGGLGWLWEFW). A run of 7 helical transmembrane segments spans residues 5-25 (LLMTYALWAFGGPVGLHHLYL), 30-50 (HALLWMLTLGGGGLGWLWEFW), 81-101 (FASQMVVGVYFGLVALISLSS), 105-125 (FYIVGLPLAVGLGVLLVAAVG), 135-155 (LGAAFLTSPVFYGRPIAILPI), 185-205 (VGLAYLAFTGPLAYSTLYNTA), and 232-252 (VESVLLLPCRIWWLLVGAPGF). The region spanning 277 to 341 (LAHQVLGIPE…QPKKPRASWR (65 aa)) is the J domain.

The protein resides in the membrane. Its function is as follows. May function as a co-chaperone. The sequence is that of DnaJ homolog subfamily C member 22 (Dnajc22) from Rattus norvegicus (Rat).